Reading from the N-terminus, the 101-residue chain is NADH-quinone oxidoreductase subunit K (101 aa).

Transmembrane regions (helical) follow at residues 4–24 (LAHFLVLGAILFAISIVGIFL), 30–50 (IVLLMAIELMLLAVNINFVAF), and 61–81 (VFVFFILTVAAAESAIGLAIL).

This sequence belongs to the complex I subunit 4L family. In terms of assembly, NDH-1 is composed of 14 different subunits. Subunits NuoA, H, J, K, L, M, N constitute the membrane sector of the complex.

The protein localises to the cell inner membrane. It catalyses the reaction a quinone + NADH + 5 H(+)(in) = a quinol + NAD(+) + 4 H(+)(out). Its function is as follows. NDH-1 shuttles electrons from NADH, via FMN and iron-sulfur (Fe-S) centers, to quinones in the respiratory chain. The immediate electron acceptor for the enzyme in this species is believed to be ubiquinone. Couples the redox reaction to proton translocation (for every two electrons transferred, four hydrogen ions are translocated across the cytoplasmic membrane), and thus conserves the redox energy in a proton gradient. In Cupriavidus necator (strain ATCC 17699 / DSM 428 / KCTC 22496 / NCIMB 10442 / H16 / Stanier 337) (Ralstonia eutropha), this protein is NADH-quinone oxidoreductase subunit K.